The sequence spans 814 residues: Glycogen phosphorylase (814 aa).

N6-(pyridoxal phosphate)lysine is present on K662.

It belongs to the glycogen phosphorylase family. It depends on pyridoxal 5'-phosphate as a cofactor.

The enzyme catalyses [(1-&gt;4)-alpha-D-glucosyl](n) + phosphate = [(1-&gt;4)-alpha-D-glucosyl](n-1) + alpha-D-glucose 1-phosphate. In terms of biological role, phosphorylase is an important allosteric enzyme in carbohydrate metabolism. Enzymes from different sources differ in their regulatory mechanisms and in their natural substrates. However, all known phosphorylases share catalytic and structural properties. The chain is Glycogen phosphorylase (glgP) from Chlamydia trachomatis serovar D (strain ATCC VR-885 / DSM 19411 / UW-3/Cx).